Consider the following 114-residue polypeptide: Large ribosomal subunit protein bL19 (114 aa).

This sequence belongs to the bacterial ribosomal protein bL19 family.

Its function is as follows. This protein is located at the 30S-50S ribosomal subunit interface and may play a role in the structure and function of the aminoacyl-tRNA binding site. In Bacillus mycoides (strain KBAB4) (Bacillus weihenstephanensis), this protein is Large ribosomal subunit protein bL19.